The chain runs to 263 residues: Endonuclease 8 (263 aa).

The Schiff-base intermediate with DNA role is filled by proline 2. The Proton donor role is filled by glutamate 3. Lysine 53 functions as the Proton donor; for beta-elimination activity in the catalytic mechanism. DNA is bound by residues glutamine 70, arginine 125, and asparagine 169. The FPG-type zinc-finger motif lies at 229 to 263; that stretch reads KVFHRDGELCERCGGIIEKTTLSSRPFYWCPGCQH. The Proton donor; for delta-elimination activity role is filled by arginine 253.

This sequence belongs to the FPG family. Zn(2+) is required as a cofactor.

The enzyme catalyses 2'-deoxyribonucleotide-(2'-deoxyribose 5'-phosphate)-2'-deoxyribonucleotide-DNA = a 3'-end 2'-deoxyribonucleotide-(2,3-dehydro-2,3-deoxyribose 5'-phosphate)-DNA + a 5'-end 5'-phospho-2'-deoxyribonucleoside-DNA + H(+). Its function is as follows. Involved in base excision repair of DNA damaged by oxidation or by mutagenic agents. Acts as a DNA glycosylase that recognizes and removes damaged bases. Has a preference for oxidized pyrimidines, such as thymine glycol, 5,6-dihydrouracil and 5,6-dihydrothymine. Has AP (apurinic/apyrimidinic) lyase activity and introduces nicks in the DNA strand. Cleaves the DNA backbone by beta-delta elimination to generate a single-strand break at the site of the removed base with both 3'- and 5'-phosphates. The protein is Endonuclease 8 of Shigella dysenteriae serotype 1 (strain Sd197).